The primary structure comprises 93 residues: Small ribosomal subunit protein uS19 (93 aa).

Belongs to the universal ribosomal protein uS19 family.

Protein S19 forms a complex with S13 that binds strongly to the 16S ribosomal RNA. This Ligilactobacillus salivarius (strain UCC118) (Lactobacillus salivarius) protein is Small ribosomal subunit protein uS19.